Here is a 159-residue protein sequence, read N- to C-terminus: Protein Smg homolog (159 aa).

The protein belongs to the Smg family.

The chain is Protein Smg homolog from Vibrio campbellii (strain ATCC BAA-1116).